The chain runs to 657 residues: MPASPEPVTATPEPEEVPAKFTLEAADIAVVVVYFVFVLAVGIWSSIRANRGTVGGYFLAGRSMTWWPIGASLMSSNVGSGLFIGLAGTGAAGGLAVGGFEWNAAWVLIALGWIFVPVYISAGVVTMPEYLRKRFGGQRIRIYMSVLSLILYILTKISTDIFSGALFIQVSLGWDLYLSTVILLAVTALYTIAGGLTAVIYTDALQTVIMVIGAFVLMFIAFDKVGWYEGLLVQYEKAAPALTVPNTTCHLPRSDAFHIFRDPVTGDIPWPGLIFGLTVLATWVWCTDQVIVQRSLSAKNLSHAKAGSVLGGYLKVFPMFFVVMPGMISRALYPDEVACVDPDECQKICGAKVGCSNIAYPKLVVELMPVGMRGLMIAVMMAALMSSLTSIFNSSSTLFTMDIWQRIRPRASEKELMVVGRVFILLLVALSIVWIPVIQTANSGQLFDYIQAITSFLSPPITTVFIMAIFWGRVNEQGAFWGLMVGLVVGMVRMIMEFVYGTPSCGETDLRPSLLKDVHYLYFALILLALTVLIITAVSLCTAPIPEKHLVRLTWWTRHSKEERVELEDPWAKPAGSDLSTTESEGSDEDAPAWWKRAGMWLCGLSQTTKQDLTEEERQALEKKLTSIEEDHMWKTVCNVNALILLTANVFLWGYFA.

The Extracellular portion of the chain corresponds to 1–24 (MPASPEPVTATPEPEEVPAKFTLE). Residues 25–45 (AADIAVVVVYFVFVLAVGIWS) traverse the membrane as a helical segment. At 46–79 (SIRANRGTVGGYFLAGRSMTWWPIGASLMSSNVG) the chain is on the cytoplasmic side. A helical membrane pass occupies residues 80-100 (SGLFIGLAGTGAAGGLAVGGF). The Extracellular segment spans residues 101–104 (EWNA). The helical transmembrane segment at 105-125 (AWVLIALGWIFVPVYISAGVV) threads the bilayer. At 126-147 (TMPEYLRKRFGGQRIRIYMSVL) the chain is on the cytoplasmic side. Residues 148 to 168 (SLILYILTKISTDIFSGALFI) form a helical membrane-spanning segment. The Extracellular segment spans residues 169-180 (QVSLGWDLYLST). The helical transmembrane segment at 181–201 (VILLAVTALYTIAGGLTAVIY) threads the bilayer. Residues 202 to 207 (TDALQT) lie on the Cytoplasmic side of the membrane. The helical transmembrane segment at 208–228 (VIMVIGAFVLMFIAFDKVGWY) threads the bilayer. Topologically, residues 229-265 (EGLLVQYEKAAPALTVPNTTCHLPRSDAFHIFRDPVT) are extracellular. Residue N246 is glycosylated (N-linked (GlcNAc...) asparagine). A helical membrane pass occupies residues 266 to 286 (GDIPWPGLIFGLTVLATWVWC). The Cytoplasmic portion of the chain corresponds to 287–307 (TDQVIVQRSLSAKNLSHAKAG). The chain crosses the membrane as a helical span at residues 308–328 (SVLGGYLKVFPMFFVVMPGMI). Residues 329–373 (SRALYPDEVACVDPDECQKICGAKVGCSNIAYPKLVVELMPVGMR) are Extracellular-facing. Residues 374-396 (GLMIAVMMAALMSSLTSIFNSSS) form a helical membrane-spanning segment. At 397–417 (TLFTMDIWQRIRPRASEKELM) the chain is on the cytoplasmic side. A helical transmembrane segment spans residues 418–438 (VVGRVFILLLVALSIVWIPVI). Topologically, residues 439–451 (QTANSGQLFDYIQ) are extracellular. A helical transmembrane segment spans residues 452–472 (AITSFLSPPITTVFIMAIFWG). Residues 473-478 (RVNEQG) lie on the Cytoplasmic side of the membrane. The helical transmembrane segment at 479 to 499 (AFWGLMVGLVVGMVRMIMEFV) threads the bilayer. Over 500–520 (YGTPSCGETDLRPSLLKDVHY) the chain is Extracellular. A helical membrane pass occupies residues 521-541 (LYFALILLALTVLIITAVSLC). Topologically, residues 542-636 (TAPIPEKHLV…SIEEDHMWKT (95 aa)) are cytoplasmic. The helical transmembrane segment at 637–657 (VCNVNALILLTANVFLWGYFA) threads the bilayer.

This sequence belongs to the sodium:solute symporter (SSF) (TC 2.A.21) family.

Its subcellular location is the membrane. In terms of biological role, probable sodium-dependent sugar transporter. This is Sodium/glucose cotransporter 4 (slc5a9) from Danio rerio (Zebrafish).